The chain runs to 230 residues: Lactate utilization protein C (230 aa).

Belongs to the LutC/YkgG family.

Its function is as follows. Is involved in L-lactate degradation and allows cells to grow with lactate as the sole carbon source. In Exiguobacterium sp. (strain ATCC BAA-1283 / AT1b), this protein is Lactate utilization protein C.